The chain runs to 424 residues: Hemagglutinin-esterase (424 aa).

An N-terminal signal peptide occupies residues 1–16 (MFLLPRFVLVSCIIGS). Positions 7-127 (FVLVSCIIGS…SNDIWMQNKG (121 aa)) are esterase domain 1. Topologically, residues 17–392 (LGFDNPPTNV…PICVYDPLPI (376 aa)) are virion surface. Residue Ser-40 is the Nucleophile of the active site. Cys-44 and Cys-65 are disulfide-bonded. Asn-54, Asn-89, Asn-153, Asn-236, and Asn-301 each carry an N-linked (GlcNAc...) asparagine; by host glycan. Cystine bridges form between Cys-113–Cys-162, Cys-197–Cys-276, and Cys-205–Cys-249. The interval 128-266 (LFYTQVYKNM…GNYLAISNEL (139 aa)) is receptor binding. Residues 267-379 (LLTVPTKAIC…RCPTAADINT (113 aa)) are esterase domain 2. A disulfide bridge links Cys-307 with Cys-312. Asn-316 carries an N-linked (GlcNAc...) asparagine; by host glycan. Catalysis depends on charge relay system residues Asp-326 and His-329. A disulfide bridge connects residues Cys-347 and Cys-371. A glycan (N-linked (GlcNAc...) asparagine; by host) is linked at Asn-358. Residues 393–413 (ILLGILLSVAVIIIVVLLLYF) form a helical membrane-spanning segment. The Intravirion portion of the chain corresponds to 414–424 (MVDNGTRLHDA). A glycan (N-linked (GlcNAc...) asparagine; by host) is linked at Asn-417.

The protein belongs to the influenza type C/coronaviruses hemagglutinin-esterase family. In terms of assembly, homodimer; disulfide-linked. Forms a complex with the M protein in the pre-Golgi. Associates then with S-M complex to form a ternary complex S-M-HE. In terms of processing, N-glycosylated in the host RER.

It localises to the virion membrane. It is found in the host cell membrane. It carries out the reaction N-acetyl-9-O-acetylneuraminate + H2O = N-acetylneuraminate + acetate + H(+). The catalysed reaction is N-acetyl-4-O-acetylneuraminate + H2O = N-acetylneuraminate + acetate + H(+). Its function is as follows. Structural protein that makes short spikes at the surface of the virus. Contains receptor binding and receptor-destroying activities. Mediates de-O-acetylation of N-acetyl-4-O-acetylneuraminic acid, which is probably the receptor determinant recognized by the virus on the surface of erythrocytes and susceptible cells. This receptor-destroying activity is important for virus release as it probably helps preventing self-aggregation and ensures the efficient spread of the progeny virus from cell to cell. May serve as a secondary viral attachment protein for initiating infection, the spike protein being the major one. May become a target for both the humoral and the cellular branches of the immune system. The chain is Hemagglutinin-esterase from Bos taurus (Bovine).